Reading from the N-terminus, the 425-residue chain is Phosphoribosylamine--glycine ligase (425 aa).

The 207-residue stretch at 109–315 (KALMQEAGIP…LEELILACVQ (207 aa)) folds into the ATP-grasp domain. 135-195 (IQAQGAPIVV…EECLTGQEVS (61 aa)) is an ATP binding site. Residues Glu285 and Asn287 each coordinate Mg(2+).

It belongs to the GARS family. The cofactor is Mg(2+). Requires Mn(2+) as cofactor.

It carries out the reaction 5-phospho-beta-D-ribosylamine + glycine + ATP = N(1)-(5-phospho-beta-D-ribosyl)glycinamide + ADP + phosphate + H(+). It functions in the pathway purine metabolism; IMP biosynthesis via de novo pathway; N(1)-(5-phospho-D-ribosyl)glycinamide from 5-phospho-alpha-D-ribose 1-diphosphate: step 2/2. This chain is Phosphoribosylamine--glycine ligase, found in Nostoc sp. (strain PCC 7120 / SAG 25.82 / UTEX 2576).